Consider the following 205-residue polypeptide: Cytochrome c biogenesis ATP-binding export protein CcmA (205 aa).

An ABC transporter domain is found at 2–204 (LEVSNLTAIR…SPKLRKIKLG (203 aa)). 34 to 41 (GRNGTGKT) provides a ligand contact to ATP.

Belongs to the ABC transporter superfamily. CcmA exporter (TC 3.A.1.107) family. The complex is composed of two ATP-binding proteins (CcmA) and two transmembrane proteins (CcmB).

Its subcellular location is the cell inner membrane. The enzyme catalyses heme b(in) + ATP + H2O = heme b(out) + ADP + phosphate + H(+). Functionally, part of the ABC transporter complex CcmAB involved in the biogenesis of c-type cytochromes; once thought to export heme, this seems not to be the case, but its exact role is uncertain. Responsible for energy coupling to the transport system. The polypeptide is Cytochrome c biogenesis ATP-binding export protein CcmA (Vibrio parahaemolyticus serotype O3:K6 (strain RIMD 2210633)).